The primary structure comprises 459 residues: Ribulose bisphosphate carboxylase large chain (459 aa).

A propeptide spanning residues 1-2 (MS) is cleaved from the precursor. At Pro-3 the chain carries N-acetylproline. Lys-14 bears the N6,N6,N6-trimethyllysine mark. The substrate site is built by Asn-123 and Thr-173. Residue Lys-175 is the Proton acceptor of the active site. Lys-177 lines the substrate pocket. Mg(2+)-binding residues include Lys-201, Asp-203, and Glu-204. Residue Lys-201 is modified to N6-carboxylysine. The active-site Proton acceptor is the His-294. Positions 295, 327, and 379 each coordinate substrate.

Belongs to the RuBisCO large chain family. Type I subfamily. In terms of assembly, heterohexadecamer of 8 large chains and 8 small chains; disulfide-linked. The disulfide link is formed within the large subunit homodimers. It depends on Mg(2+) as a cofactor. Post-translationally, the disulfide bond which can form in the large chain dimeric partners within the hexadecamer appears to be associated with oxidative stress and protein turnover.

Its subcellular location is the plastid. It is found in the chloroplast. The enzyme catalyses 2 (2R)-3-phosphoglycerate + 2 H(+) = D-ribulose 1,5-bisphosphate + CO2 + H2O. The catalysed reaction is D-ribulose 1,5-bisphosphate + O2 = 2-phosphoglycolate + (2R)-3-phosphoglycerate + 2 H(+). In terms of biological role, ruBisCO catalyzes two reactions: the carboxylation of D-ribulose 1,5-bisphosphate, the primary event in carbon dioxide fixation, as well as the oxidative fragmentation of the pentose substrate in the photorespiration process. Both reactions occur simultaneously and in competition at the same active site. In Streptopus lanceolatus (Rose twisted stalk), this protein is Ribulose bisphosphate carboxylase large chain.